The sequence spans 3004 residues: Guanylate cyclase beta (3004 aa).

Topologically, residues 1–66 (MKETDKIKSE…FSLYNFIRRL (66 aa)) are cytoplasmic. Residues 67–87 (ISLDAVIVYTLFMTVYIFSEI) traverse the membrane as a helical segment. Residues 88-94 (SQGITKK) are Extracellular-facing. A helical transmembrane segment spans residues 95-115 (YLFVDTAISLFLNIGILVVIE). Residues 116–300 (SLFELKLLKD…TFCIKMNNVV (185 aa)) are Cytoplasmic-facing. A helical transmembrane segment spans residues 301–321 (YYLIFMYILFVLLSIIIKAIF). Residues 322-334 (YRKGKLLENSNDT) are Extracellular-facing. Residue asparagine 332 is glycosylated (N-linked (GlcNAc...) asparagine). The chain crosses the membrane as a helical span at residues 335-355 (FFTVLEDFIGLYILVLPVMLY). Residues 356–991 (SEKSLIYIIQ…GRLNRFSLCR (636 aa)) are Cytoplasmic-facing. Residues 992-1012 (AFLWIIYLKVMIGSFYFFHNF) form a helical membrane-spanning segment. Residues 1013-1022 (DNFFSGSSIS) are Extracellular-facing. A helical transmembrane segment spans residues 1023-1043 (SILYSQTAFAIFHYSLIVAFA). The Cytoplasmic portion of the chain corresponds to 1044–1072 (SYEIDIPYKFIRNFPYIYQLARRKYFLNN). Residues 1073–1093 (TIIFLNIVESIFSSFISYYIL) form a helical membrane-spanning segment. The Extracellular segment spans residues 1094–1105 (RGNLFNLITHRK). Residues 1106–1126 (FTFHIFVLNFFLISEKILLFS) form a helical membrane-spanning segment. Residues 1127–1130 (KTWH) are Cytoplasmic-facing. Residues 1131–1151 (IFFFIMTIIIVSILFIYINIY) form a helical membrane-spanning segment. Over 1152 to 1171 (TLVDCLITGKCEFSLFDPED) the chain is Extracellular. A helical membrane pass occupies residues 1172–1192 (SYFWISLLPILYINFIIDKFM). Residues 1193–1297 (KFVKNKIYPD…YEKRNKLKLR (105 aa)) lie on the Cytoplasmic side of the membrane. Residues 1298 to 1318 (IIILLLFIIFLITFTIQIIIS) form a helical membrane-spanning segment. Residues 1319–1327 (KFIEKKLHS) lie on the Extracellular side of the membrane. Residues 1328-1348 (LSYLTVIYYIVAVLYLIKILI) form a helical membrane-spanning segment. Residues 1349–1353 (RNKTN) are Cytoplasmic-facing. The helical transmembrane segment at 1354 to 1374 (YTYFYIIGKLLLVIGYLLEIS) threads the bilayer. Over 1375-1394 (ENSVNNIINMLVTYSFTVCY) the chain is Extracellular. The helical transmembrane segment at 1395–1415 (IFFISFKILEGLVMCIIILSI) threads the bilayer. Residues 1416–1457 (AIWVYYHKNNNLNAMCTDFCDNPYTSLDNLEYINISCICKQQ) lie on the Cytoplasmic side of the membrane. Residues 1458–1478 (IFTFLICTLSFTLICLFMKYY) traverse the membrane as a helical segment. Topologically, residues 1479 to 1500 (EIYYLKKKFLTRYKQKVNLGKQ) are extracellular. Residues 1501–1521 (IEILHTMLPSFLVEYLLVSDP) form a helical membrane-spanning segment. The Cytoplasmic segment spans residues 1522–2563 (KADGIMVGKN…EIINIDLTKK (1042 aa)). Positions 1541 to 1696 (SVIFCDIDDF…DTVNTASRMK (156 aa)) constitute a Guanylate cyclase 1 domain. The span at 2463-2476 (TMSNSKSGQTNITT) shows a compositional bias: polar residues. The segment at 2463–2491 (TMSNSKSGQTNITTDNKKSQIKKNGDVNK) is disordered. Residues 2477 to 2488 (DNKKSQIKKNGD) show a composition bias toward basic and acidic residues. The chain crosses the membrane as a helical span at residues 2564–2584 (LIIIFVISELILSLCNVIELS). Residues 2585-2594 (YYENKETPND) lie on the Extracellular side of the membrane. The chain crosses the membrane as a helical span at residues 2595–2615 (FIVIIWLIRSIYLFTITFIWL). The Cytoplasmic segment spans residues 2616–2634 (LLKTKLKEYKDNSSKMMWT). Residues 2635-2655 (TFILNIFLSSWGIIMIDLACI) form a helical membrane-spanning segment. The Extracellular portion of the chain corresponds to 2656–2667 (HYSNLVGNSRER). Residues 2668-2688 (SIFFMKDATELIISMQLIFVK) form a helical membrane-spanning segment. The Cytoplasmic segment spans residues 2689 to 2695 (NMLFKHK). The helical transmembrane segment at 2696–2716 (FFFFVFFFVFLMYSFFKLFVI) threads the bilayer. Topologically, residues 2717–2722 (HVCELR) are extracellular. A helical membrane pass occupies residues 2723–2743 (ICCSILLILSINILYFWYSEY). Over 2744–3004 (LDRTQYIIKR…KLREQNKVKG (261 aa)) the chain is Cytoplasmic. The region spanning 2793-2927 (AFLFADIVGF…LDVLIANHIE (135 aa)) is the Guanylate cyclase 2 domain. Residues aspartate 2798, isoleucine 2799, and aspartate 2842 each coordinate Mg(2+).

In the N-terminal section; belongs to the cation transport ATPase (P-type) (TC 3.A.3) family. Type IV subfamily. It in the C-terminal section; belongs to the adenylyl cyclase class-4/guanylyl cyclase family. Mg(2+) is required as a cofactor. Requires Mn(2+) as cofactor.

The protein localises to the membrane. It catalyses the reaction GTP = 3',5'-cyclic GMP + diphosphate. In terms of biological role, catalyzes the synthesis of the second messenger cGMP from GTP. Probably by regulating cGMP production, required for ookinete gliding motility, which is necessary for the ookinete to traverse the midgut epithelium of the mosquito. The polypeptide is Guanylate cyclase beta (Plasmodium berghei (strain Anka)).